Reading from the N-terminus, the 923-residue chain is Protein dct-6 (923 aa).

The stretch at 312–347 (DMNDQIEQMISLLVDELSELEKLEQLCKEVERTGNQ) forms a coiled coil.

In terms of biological role, may have a role in tumor suppression. This Caenorhabditis elegans protein is Protein dct-6 (dct-6).